We begin with the raw amino-acid sequence, 95 residues long: Putative RelE-like toxin protein (95 aa).

It belongs to the RelE toxin family.

Functionally, toxic component of a type II toxin-antitoxin (TA) system. The protein is Putative RelE-like toxin protein of Escherichia coli.